The chain runs to 439 residues: Glutamate--tRNA ligase 2 (439 aa).

The 'HIGH' region signature appears at proline 9–asparagine 19. The 'KMSKS' region signature appears at lysine 233–arginine 237. Lysine 236 provides a ligand contact to ATP.

Belongs to the class-I aminoacyl-tRNA synthetase family. Glutamate--tRNA ligase type 1 subfamily. Monomer.

It is found in the cytoplasm. It carries out the reaction tRNA(Glu) + L-glutamate + ATP = L-glutamyl-tRNA(Glu) + AMP + diphosphate. In terms of biological role, catalyzes the attachment of glutamate to tRNA(Glu) in a two-step reaction: glutamate is first activated by ATP to form Glu-AMP and then transferred to the acceptor end of tRNA(Glu). This is Glutamate--tRNA ligase 2 from Sphingopyxis alaskensis (strain DSM 13593 / LMG 18877 / RB2256) (Sphingomonas alaskensis).